An 817-amino-acid chain; its full sequence is Putative receptor protein kinase ZmPK1 (817 aa).

The first 28 residues, 1–28 (MPRPLAALLSTACILSFFIALFPRAASS), serve as a signal peptide directing secretion. In terms of domain architecture, Bulb-type lectin spans 29–158 (RDILPLGSSL…GGNTVWQSFD (130 aa)). The Extracellular portion of the chain corresponds to 29–472 (RDILPLGSSL…HKTGGGESKW (444 aa)). N-linked (GlcNAc...) asparagine glycans are attached at residues Asn83, Asn128, Asn228, and Asn279. The region spanning 292–328 (MTQPCNIHGLCGPNGICHYSPTPTCSCPPGYATRNPG) is the EGF-like domain. 2 disulfide bridges follow: Cys296–Cys308 and Cys302–Cys316. Asn329 and Asn339 each carry an N-linked (GlcNAc...) asparagine glycan. The PAN domain occupies 342–424 (CDRYDKRSMR…VRTIYLKLPT (83 aa)). 2 cysteine pairs are disulfide-bonded: Cys376/Cys398 and Cys384/Cys386. Asn452 is a glycosylation site (N-linked (GlcNAc...) asparagine). A helical transmembrane segment spans residues 473–498 (FYFYGFIAAFFVVEVSFISFAWFFVL). Residues 499 to 817 (KRELRPSELW…AVQTLLSADD (319 aa)) are Cytoplasmic-facing. One can recognise a Protein kinase domain in the interval 534 to 817 (RKFKVELGRG…AVQTLLSADD (284 aa)). ATP-binding positions include 540–548 (LGRGESGTV) and Lys562. Asp658 (proton acceptor) is an active-site residue.

Belongs to the protein kinase superfamily. Ser/Thr protein kinase family. As to expression, expressed predominantly in the shoots and roots of young maize seedlings, and to a lesser extent in the silks.

It is found in the membrane. The enzyme catalyses L-seryl-[protein] + ATP = O-phospho-L-seryl-[protein] + ADP + H(+). The catalysed reaction is L-threonyl-[protein] + ATP = O-phospho-L-threonyl-[protein] + ADP + H(+). Functionally, probable receptor. Interaction with a ligand in the extracellular domain triggers the protein kinase activity of the cytoplasmic domain. This chain is Putative receptor protein kinase ZmPK1 (PK1), found in Zea mays (Maize).